Here is a 471-residue protein sequence, read N- to C-terminus: 6-phosphofructo-2-kinase/fructose-2,6-bisphosphatase 1 (471 aa).

N-acetylserine is present on Ser-2. A 6-phosphofructo-2-kinase region spans residues 2-250 (SPEMGELTQT…VYYLMNIHVT (249 aa)). Ser-33 carries the phosphoserine; by PKA modification. Residue 49-57 (GLPARGKTY) coordinates ATP. 2 residues coordinate beta-D-fructose 6-phosphate: Arg-82 and Arg-105. The active site involves Asp-131. 2 residues coordinate beta-D-fructose 6-phosphate: Thr-133 and Arg-139. Ser-141 carries the phosphoserine modification. Cys-161 is a catalytic residue. Position 170-175 (170-175 (NIRQVK)) interacts with ATP. Beta-D-fructose 6-phosphate is bound by residues Lys-175, Arg-196, and Tyr-200. The segment at 251 to 471 (PRSIYLCRHG…EALDTVPAHY (221 aa)) is fructose-2,6-bisphosphatase. Arg-258 lines the beta-D-fructose 2,6-bisphosphate pocket. His-259 (tele-phosphohistidine intermediate) is an active-site residue. Positions 265, 271, and 308 each coordinate beta-D-fructose 2,6-bisphosphate. The active-site Proton donor/acceptor is Glu-328. Beta-D-fructose 2,6-bisphosphate is bound by residues Tyr-339, Arg-353, Lys-357, Tyr-368, Gln-394, and Arg-398. 350-353 (FALR) is an ATP binding site. ATP-binding positions include 394-398 (QAVMR) and Tyr-430.

This sequence in the C-terminal section; belongs to the phosphoglycerate mutase family. As to quaternary structure, homodimer. In terms of tissue distribution, liver.

The enzyme catalyses beta-D-fructose 2,6-bisphosphate + H2O = beta-D-fructose 6-phosphate + phosphate. It carries out the reaction beta-D-fructose 6-phosphate + ATP = beta-D-fructose 2,6-bisphosphate + ADP + H(+). With respect to regulation, phosphorylation at Ser-33 inhibits the kinase and activates the bisphosphatase. Functionally, synthesis and degradation of fructose 2,6-bisphosphate. The polypeptide is 6-phosphofructo-2-kinase/fructose-2,6-bisphosphatase 1 (Homo sapiens (Human)).